The chain runs to 381 residues: Dynactin subunit 2 (381 aa).

A disordered region spans residues 15–39 (DQPDVYETPDAPESETSDFYDEEPA). The span at 24-39 (DAPESETSDFYDEEPA) shows a compositional bias: acidic residues. Coiled coils occupy residues 100 to 216 (QKCL…AVGA) and 350 to 381 (GVQE…EKVK).

It belongs to the dynactin subunit 2 family. Subunit of dynactin, a multiprotein complex associated with dynein.

The protein resides in the cytoplasm. Its subcellular location is the cytoskeleton. The protein localises to the membrane. Functionally, modulates cytoplasmic dynein binding to an organelle, and plays a role in prometaphase chromosome alignment and spindle organization during mitosis. This Aedes aegypti (Yellowfever mosquito) protein is Dynactin subunit 2.